The chain runs to 146 residues: Large ribosomal subunit protein uL15 (146 aa).

The interval Met-1–Arg-64 is disordered. A compositionally biased stretch (basic residues) spans Thr-30–Lys-39.

The protein belongs to the universal ribosomal protein uL15 family. In terms of assembly, part of the 50S ribosomal subunit.

Its function is as follows. Binds to the 23S rRNA. The polypeptide is Large ribosomal subunit protein uL15 (Geobacter sp. (strain M21)).